The sequence spans 157 residues: Small ribosomal subunit protein uS7 (157 aa).

The protein belongs to the universal ribosomal protein uS7 family. Part of the 30S ribosomal subunit. Contacts proteins S9 and S11.

Functionally, one of the primary rRNA binding proteins, it binds directly to 16S rRNA where it nucleates assembly of the head domain of the 30S subunit. Is located at the subunit interface close to the decoding center, probably blocks exit of the E-site tRNA. The chain is Small ribosomal subunit protein uS7 from Borrelia hermsii (strain HS1 / DAH).